Here is a 311-residue protein sequence, read N- to C-terminus: Probable flavin reductase (311 aa).

Residues 38–41 (TANS), 55–61 (CLAKSSR), 88–89 (FA), and arginine 95 contribute to the FMN site.

It belongs to the non-flavoprotein flavin reductase family.

This chain is Probable flavin reductase, found in Rhizobium meliloti (strain 1021) (Ensifer meliloti).